Reading from the N-terminus, the 600-residue chain is DNA repair and recombination protein mus-11 (600 aa).

A DNA-binding region spans residues 148-152; sequence KRALR. Polar residues predominate over residues 268 to 319; that stretch reads LNPQAQQSRPLSRSGSTGSLNTRQQPQNSHQFTARAQSRPPQQQLNSNQSRP. Disordered regions lie at residues 268 to 357 and 387 to 600; these read LNPQ…AGAA and APKP…QRLA. Composition is skewed to low complexity over residues 325 to 343 and 458 to 470; these read NNSSNANTPNNPQNYTTPQ and ARSASGSFSRAGP. Polar residues predominate over residues 502–512; that stretch reads GFSSSPSTNRG. 2 stretches are compositionally biased toward low complexity: residues 540–564 and 577–591; these read SATTTTIAANTTAGSATGGNAAPSA and ANASNATAAGAATSG.

It belongs to the RAD52 family. As to quaternary structure, part of a complex that includes mei-3/rad51 and mus-11/rad52.

The protein localises to the nucleus. Functionally, involved in DNA double-strand break (DSB) repair and recombination. Promotes the annealing of complementary single-stranded DNA and by stimulation of the mei-3/rad51 recombinase. In Neurospora crassa (strain ATCC 24698 / 74-OR23-1A / CBS 708.71 / DSM 1257 / FGSC 987), this protein is DNA repair and recombination protein mus-11 (mus-11).